The following is a 53-amino-acid chain: Large ribosomal subunit protein bL33 (53 aa).

It belongs to the bacterial ribosomal protein bL33 family.

The protein is Large ribosomal subunit protein bL33 of Ureaplasma parvum serovar 3 (strain ATCC 27815 / 27 / NCTC 11736).